The sequence spans 2768 residues: Thyroglobulin (2768 aa).

The signal sequence occupies residues 1–20; it reads MMTLVLWVSTLLSSVCLVAA. Y25 carries the post-translational modification Iodotyrosine; alternate. Y25 bears the Sulfotyrosine; alternate mark. Thyroxine; alternate is present on Y25. At Y25 the chain carries Triiodothyronine; alternate. Thyroglobulin type-1 domains follow at residues 32–93, 94–161, 162–298, and 299–359; these read LRPC…PTAC, LSFC…PTRC, PRSC…RFRC, and PTKC…PLFC. Cystine bridges form between C35-C53, C64-C71, C73-C93, C97-C121, C132-C139, C141-C161, C165-C184, and C195-C236. Y109 is modified (iodotyrosine). Residue N111 is glycosylated (N-linked (GlcNAc...) asparagine). Position 150 is an iodotyrosine; alternate (Y150). A Diiodotyrosine; alternate modification is found at Y150. The N-linked (GlcNAc...) asparagine glycan is linked to N199. An iodotyrosine mark is found at Y235 and Y259. 8 disulfides stabilise this stretch: C302-C320, C331-C337, C339-C365, C408-C608, C631-C636, C638-C658, C662-C687, and C698-C703. N-linked (GlcNAc...) asparagine glycans are attached at residues N484, N496, and N545. Thyroglobulin type-1 domains lie at 605 to 658, 659 to 726, 727 to 922, 923 to 1074, 1075 to 1146, and 1147 to 1211; these read AQAC…HPRC, PTKC…PKLC, PSVC…IPAC, PGPC…MPQC, PTSC…SAQC, and PGLC…QPAC. Y704 carries the iodotyrosine; alternate modification. The residue at position 704 (Y704) is a Thyroxine; alternate. Y704 bears the Triiodothyronine; alternate mark. A Diiodotyrosine; alternate modification is found at Y704. Intrachain disulfides connect C705–C726, C730–C763, C774–C899, C901–C922, C926–C1032, C1043–C1050, C1052–C1074, C1078–C1109, C1127–C1146, C1150–C1170, C1182–C1189, C1191–C1211, C1216–C1265, C1232–C1246, C1306–C1356, and C1331–C1347. An N-linked (GlcNAc...) asparagine glycan is attached at N748. Residue Y785 is modified to Iodotyrosine. N817 carries an N-linked (GlcNAc...) asparagine glycan. Y867 is subject to Iodotyrosine; alternate. Y867 carries the diiodotyrosine; alternate modification. Y884 carries the post-translational modification Diiodotyrosine. The N-linked (GlcNAc...) asparagine glycan is linked to N948. Y993 carries the iodotyrosine; alternate modification. Y993 carries the post-translational modification Diiodotyrosine; alternate. Residue N1017 is glycosylated (N-linked (GlcNAc...) asparagine). N1141 is a glycosylation site (N-linked (GlcNAc...) asparagine). Y1310 is modified (iodotyrosine). Y1310 carries the post-translational modification Thyroxine. 2 N-linked (GlcNAc...) asparagine glycosylation sites follow: N1349 and N1365. Disulfide bonds link C1441/C1458, C1461/C1472, C1475/C1489, C1492/C1509, C1513/C1522, C1542/C1564, C1602/C1626, C1606/C1612, and C1638/C1661. Type II repeat units follow at residues 1455–1468, 1469–1485, and 1486–1502; these read PLGCVKCPEGSFSQ, DGKCTPCPAGTYQGQAG, and SSACIPCPRGRTTTITG. One can recognise a Thyroglobulin type-1 11 domain in the interval 1510 to 1564; it reads VTDCQRDEAGLQCDQNGQYQANQKDMDSGEVFCVDSEGQRLQWLQTEAGLSESQC. Residues 1602-1722 form a Type IIIA repeat; that stretch reads CLADCADDEA…GTNLTDTHLF (121 aa). N-linked (GlcNAc...) asparagine glycosylation occurs at N1715. Disulfide bonds link C1723-C1748, C1727-C1733, C1732-C1834, and C1759-C1776. A Type IIIB repeat occupies 1723–1891; it reads CLLACDQDSC…LFSAEQANLW (169 aa). N-linked (GlcNAc...) asparagine glycosylation is found at N1773 and N1866. Cystine bridges form between C1892-C1918, C1896-C1903, C1927-C1938, C1995-C2023, C1999-C2005, C2004-C2075, and C2034-C2047. A Type IIIA repeat occupies 1892 to 1994; it reads CLSRCAQEPV…EKLISNGFFE (103 aa). N1937 carries N-linked (GlcNAc...) asparagine glycosylation. A Type IIIB repeat occupies 1995–2127; that stretch reads CERLCDRDPC…SATRNFSLAQ (133 aa). A glycan (N-linked (GlcNAc...) asparagine) is linked at N2012. The N-linked (GlcNAc...) asparagine glycan is linked to N2122. A Type IIIA repeat occupies 2128–2185; it reads DFCLQECSRHQDCLVTTLQIQQGVVRCVFYPDIQSCEHSLRSKTCWLLLHEEAAYIYR. Disulfide bonds link C2130-C2154, C2134-C2140, and C2163-C2172. Y2184 is subject to Iodotyrosine. Residues 2188 to 2768 are cholinesterase-like (ChEL); that stretch reads GAPLHQSDGI…LEPVPKSYSK (581 aa). Residue N2251 is glycosylated (N-linked (GlcNAc...) asparagine). Cysteines 2265 and 2282 form a disulfide. 2 N-linked (GlcNAc...) asparagine glycosylation sites follow: N2296 and N2445. A disulfide bond links C2443 and C2454. At Y2541 the chain carries Thyroxine. Y2574 is modified (iodotyrosine; alternate). Thyroxine; alternate is present on Y2574. At Y2574 the chain carries Triiodothyronine; alternate. Y2574 is modified (diiodotyrosine; alternate). N2583 carries an N-linked (GlcNAc...) asparagine glycan. An iodotyrosine mark is found at Y2588 and Y2618. C2592 and C2716 are joined by a disulfide. Y2698 bears the Diiodotyrosine mark. The disordered stretch occupies residues 2731-2768; sequence GAKDAQLTKSGEEDLEVGPGSEEDFSGSLEPVPKSYSK. Positions 2743 to 2755 are enriched in acidic residues; it reads EDLEVGPGSEEDF. Y2766 is subject to Iodotyrosine; alternate. Y2766 bears the Thyroxine; alternate mark. The residue at position 2766 (Y2766) is a Triiodothyronine; alternate. Y2766 carries the diiodotyrosine; alternate modification.

It belongs to the type-B carboxylesterase/lipase family. As to quaternary structure, monomer. Homodimer (via ChEL region); occurs in the endoplasmic reticulum and is required for export to the Golgi apparatus. Homooligomer; disulfide-linked; stored in this form in the thyroid follicle lumen. Iodinated on tyrosine residues by TPO. There are 4 pairs of iodinated tyrosines used for coupling: acceptor Tyr-25 is coupled to donor Tyr-150 or Tyr-235, acceptor Tyr-2574 is coupled to donor Tyr-2541, acceptor Tyr-2766 in monomer 1 is coupled to donor Tyr-2766 in monomer 2 and acceptor Tyr-1310 in monomer 1 is coupled to donor Tyr-109 in monomer 2. In terms of processing, sulfated tyrosines are desulfated during iodination. Post-translationally, undergoes sequential proteolysis by cathepsins to release thyroxine (T4) and triiodothyronine (T3) hormones. In the thyroid follicle lumen, cross-linked TG (storage form) is solubilized by limited proteolysis mediated by cathepsins CTSB and/or CTSL. Partially cleaved TG is further processed by CTSK/cathepsin K and/or CTSL resulting in the release of thyroxine (T4). Following endocytosis, further processing occurs leading to the release of triiodothyronine (T3) and more T4 hormones. As to expression, specifically expressed in the thyroid gland.

The protein resides in the secreted. In terms of biological role, acts as a substrate for the production of iodinated thyroid hormones thyroxine (T4) and triiodothyronine (T3). The synthesis of T3 and T4 involves iodination of selected tyrosine residues of TG/thyroglobulin followed by their oxidative coupling. Following TG re-internalization and lysosomal-mediated proteolysis, T3 and T4 are released from the polypeptide backbone leading to their secretion into the bloodstream. One dimer produces 7 thyroid hormone molecules. The protein is Thyroglobulin (Tg) of Rattus norvegicus (Rat).